The following is a 206-amino-acid chain: Large ribosomal subunit protein eL13z (206 aa).

A disordered region spans residues 185–206; it reads TNKRHAGARAKRAAEAEKEEKK. Positions 186-195 are enriched in basic residues; the sequence is NKRHAGARAK. Over residues 196–206 the composition is skewed to basic and acidic residues; it reads RAAEAEKEEKK.

It belongs to the eukaryotic ribosomal protein eL13 family.

The protein resides in the cytoplasm. This Arabidopsis thaliana (Mouse-ear cress) protein is Large ribosomal subunit protein eL13z (RPL13B).